Consider the following 271-residue polypeptide: Ribonuclease 3 (271 aa).

In terms of domain architecture, RNase III spans 5–139 (PALLELKLDY…IMAAIYLDGG (135 aa)). Mg(2+) is bound at residue glutamate 52. The active site involves aspartate 56. The Mg(2+) site is built by aspartate 125 and glutamate 128. Glutamate 128 is a catalytic residue. The region spanning 172 to 241 (NFKSALQELA…ARGLYERLMG (70 aa)) is the DRBM domain. Positions 241–271 (GDPIVPLPDDSPGDSPDDSGDAAESGVISAT) are disordered. Residues 251-261 (SPGDSPDDSGD) are compositionally biased toward acidic residues.

Belongs to the ribonuclease III family. In terms of assembly, homodimer. The cofactor is Mg(2+).

The protein resides in the cytoplasm. The enzyme catalyses Endonucleolytic cleavage to 5'-phosphomonoester.. In terms of biological role, digests double-stranded RNA. Involved in the processing of primary rRNA transcript to yield the immediate precursors to the large and small rRNAs (23S and 16S). Processes some mRNAs, and tRNAs when they are encoded in the rRNA operon. Processes pre-crRNA and tracrRNA of type II CRISPR loci if present in the organism. This chain is Ribonuclease 3, found in Solibacter usitatus (strain Ellin6076).